Consider the following 42-residue polypeptide: Large ribosomal subunit protein P2 (42 aa).

The protein belongs to the eukaryotic ribosomal protein P1/P2 family. P1 and P2 exist as dimers at the large ribosomal subunit. Post-translationally, phosphorylated.

In terms of biological role, plays an important role in the elongation step of protein synthesis. The protein is Large ribosomal subunit protein P2 of Triticum aestivum (Wheat).